A 31-amino-acid polypeptide reads, in one-letter code: Cytochrome b6-f complex subunit 6 (31 aa).

A helical transmembrane segment spans residues 3–23; that stretch reads ILINYFLLVGFCFALASGLFL.

This sequence belongs to the PetL family. In terms of assembly, the 4 large subunits of the cytochrome b6-f complex are cytochrome b6, subunit IV (17 kDa polypeptide, PetD), cytochrome f and the Rieske protein, while the 4 small subunits are PetG, PetL, PetM and PetN. The complex functions as a dimer.

The protein resides in the plastid. Its subcellular location is the chloroplast thylakoid membrane. Functionally, component of the cytochrome b6-f complex, which mediates electron transfer between photosystem II (PSII) and photosystem I (PSI), cyclic electron flow around PSI, and state transitions. PetL is important for photoautotrophic growth as well as for electron transfer efficiency and stability of the cytochrome b6-f complex. This is Cytochrome b6-f complex subunit 6 from Thalassiosira pseudonana (Marine diatom).